The following is a 288-amino-acid chain: Glucose-1-phosphate thymidylyltransferase (288 aa).

Residues Asp-108 and Asp-223 each coordinate Mg(2+).

This sequence belongs to the glucose-1-phosphate thymidylyltransferase family. Homotetramer. Requires Mg(2+) as cofactor.

It carries out the reaction dTTP + alpha-D-glucose 1-phosphate + H(+) = dTDP-alpha-D-glucose + diphosphate. Catalyzes the formation of dTDP-glucose, from dTTP and glucose 1-phosphate, as well as its pyrophosphorolysis. This Neisseria gonorrhoeae protein is Glucose-1-phosphate thymidylyltransferase (rmlA).